The sequence spans 156 residues: uncharacterized protein (156 aa).

Residues 43 to 84 are a coiled coil; it reads LKIDENEVKLEISVEKLKNLSRVCENIEQVVDKVVEELRYAL.

This is an uncharacterized protein from Aquifex aeolicus (strain VF5).